The primary structure comprises 4007 residues: PKS-NRPS hybrid synthetase psoA (4007 aa).

The region spanning 8–444 (KEPIAIIGTG…GTNCHAIVES (437 aa)) is the Ketosynthase family 3 (KS3) domain. Residues cysteine 182, histidine 321, and histidine 364 each act as for beta-ketoacyl synthase activity in the active site. The segment at 575-897 (VFTGQGAQWA…VLDRKADDIL (323 aa)) is malonyl-CoA:ACP transacylase (MAT) domain. Positions 969–1105 (HPLLGSRTPD…GHIRITLAAE (137 aa)) are N-terminal hotdog fold. Residues 969–1147 (HPLLGSRTPD…LSYSGPFRAM (179 aa)) form a dehydratase (DH) domain region. The PKS/mFAS DH domain occupies 969–1276 (HPLLGSRTPD…MSSFLPASEK (308 aa)). Histidine 1001 (proton acceptor; for dehydratase activity) is an active-site residue. The C-terminal hotdog fold stretch occupies residues 1120 to 1276 (DLLPTSVDRF…MSSFLPASEK (157 aa)). Catalysis depends on aspartate 1179, which acts as the Proton donor; for dehydratase activity. The ketoreductase (KR) domain stretch occupies residues 2131 to 2305 (TYLLVGLTGH…PASVIDIGMV (175 aa)). Residues 2418 to 2495 (EARKVMENAL…QICDEVVASL (78 aa)) form the Carrier 1 domain. Serine 2455 carries the post-translational modification O-(pantetheine 4'-phosphoryl)serine. Positions 2513 to 2550 (PAHKLRPWDKPSADTKRTDSIAPVPRSQIAANGPNGLP) are disordered. Basic and acidic residues predominate over residues 2518–2531 (RPWDKPSADTKRTD). A condensation (C) domain region spans residues 2589–2885 (QPLSLGQSRL…LETIPLWFKV (297 aa)). An adenylation (A) domain region spans residues 3076 to 3478 (TYVQLAERAN…LGDVARALVQ (403 aa)). The Carrier 2 domain maps to 3576-3652 (TPTEARLRDV…LLAARLDGTS (77 aa)). The residue at position 3612 (serine 3612) is an O-(pantetheine 4'-phosphoryl)serine. Residues 3696-3920 (LTGATGFLGG…INVETVSNNI (225 aa)) form a reductase (R) domain region.

This sequence in the C-terminal section; belongs to the NRP synthetase family.

The protein operates within secondary metabolite biosynthesis. Functionally, PKS-NRPS hybrid synthetase; part of the gene cluster that mediates the biosynthesis of pseurotin A, a competitive inhibitor of chitin synthase and an inducer of nerve-cell proliferation. The PKS-NRPS hybrid synthetase psoA is responsible for the biosynthesis of azaspirene, one of the first intermediates having the 1-oxa-7-azaspiro[4,4]-non-2-ene-4,6-dione core of pseurotin, via condensation of one acetyl-CoA, 4 malonyl-CoA, and a L-phenylalanine molecule. The dual-functional monooxygenase/methyltransferase psoF seems to be involved in the addition of the C3 methyl group onto the pseurotin scaffold. Azaspirene is then converted to synerazol through 4 steps including oxidation of C17 by the cytochrome P450 monooxygenase psoD, O-methylation of the hydroxy group of C8 by the methyltransferase psoC, and the trans-to-cis isomerization of the C13 olefin by the glutathione S-transferase psoE. The fourth step of synerazol production is performed by the dual-functional monooxygenase/methyltransferase psoF which seems to catalyze the epoxidation of the intermediate deepoxy-synerazol. Synerazol can be attacked by a water molecule nonenzymatically at two different positions to yield two diol products, pseurotin A and pseurotin D. The chain is PKS-NRPS hybrid synthetase psoA from Aspergillus fumigatus (strain ATCC MYA-4609 / CBS 101355 / FGSC A1100 / Af293) (Neosartorya fumigata).